Here is a 329-residue protein sequence, read N- to C-terminus: GMP reductase (329 aa).

Catalysis depends on Cys178, which acts as the Thioimidate intermediate. 207-230 contacts NADP(+); it reads VIADGGIRTHGDIAKSIRMGATMV.

Belongs to the IMPDH/GMPR family. GuaC type 2 subfamily.

It carries out the reaction IMP + NH4(+) + NADP(+) = GMP + NADPH + 2 H(+). In terms of biological role, catalyzes the irreversible NADPH-dependent deamination of GMP to IMP. It functions in the conversion of nucleobase, nucleoside and nucleotide derivatives of G to A nucleotides, and in maintaining the intracellular balance of A and G nucleotides. The protein is GMP reductase of Lactococcus lactis subsp. lactis (strain IL1403) (Streptococcus lactis).